We begin with the raw amino-acid sequence, 442 residues long: Cytokine receptor-like factor 3 (442 aa).

Residue Met1 is modified to N-acetylmethionine. Residues 10–57 (ELLLQEARENVEAAQSYRRELGHRLEGLREARRQIKESASQTRDVLKQ) adopt a coiled-coil conformation. Positions 181-274 (PPVQIEELIE…PQIGHSTLVP (94 aa)) constitute a Fibronectin type-III domain.

Belongs to the cytokine receptor-like factor 3 family. Expressed in several embryonic and adult tissues, including adult and fetal brain, liver, spleen and pancreas. Expressed in adult, but not fetal kidney. Expressed in skin and squamous cell carcinoma (SCC) and in several other cancer types. Also detected in lesion actinic keratosis (AK).

Its subcellular location is the cytoplasm. In terms of biological role, may play a role in the negative regulation of cell cycle progression. The sequence is that of Cytokine receptor-like factor 3 (CRLF3) from Homo sapiens (Human).